The sequence spans 411 residues: LL-diaminopimelate aminotransferase (411 aa).

Residues Tyr-16 and Gly-43 each coordinate substrate. Pyridoxal 5'-phosphate is bound by residues Tyr-73, 109-110, Tyr-133, Asn-188, Tyr-219, and 247-249; these read AK and SFS. Lys-110, Tyr-133, and Asn-188 together coordinate substrate. Position 250 is an N6-(pyridoxal phosphate)lysine (Lys-250). Pyridoxal 5'-phosphate is bound by residues Arg-258 and Asn-293. Substrate contacts are provided by Asn-293 and Arg-389.

It belongs to the class-I pyridoxal-phosphate-dependent aminotransferase family. LL-diaminopimelate aminotransferase subfamily. Homodimer. It depends on pyridoxal 5'-phosphate as a cofactor.

The enzyme catalyses (2S,6S)-2,6-diaminopimelate + 2-oxoglutarate = (S)-2,3,4,5-tetrahydrodipicolinate + L-glutamate + H2O + H(+). Its pathway is amino-acid biosynthesis; L-lysine biosynthesis via DAP pathway; LL-2,6-diaminopimelate from (S)-tetrahydrodipicolinate (aminotransferase route): step 1/1. In terms of biological role, involved in the synthesis of meso-diaminopimelate (m-DAP or DL-DAP), required for both lysine and peptidoglycan biosynthesis. Catalyzes the direct conversion of tetrahydrodipicolinate to LL-diaminopimelate. The chain is LL-diaminopimelate aminotransferase from Methanobrevibacter smithii (strain ATCC 35061 / DSM 861 / OCM 144 / PS).